Consider the following 360-residue polypeptide: MKQIPIEYQVSPYMVFFLIITIQMGVGMLGFERISAKLVGNDAWISTLLFGISVNVMIWIIYQILNQGNGDIIAINQNVLGKWIGGLLNFIFLSYIVLLGATTLHTYIEVVHVWMFPSISSWVIAGAFLGLCYYIVTGGFRVVAGIGFFGIVIPSILIFTFFYPLQYADFRNLFPIAQHSFLEIMKGMKGNMFSFFGFEMLLLYYPFIKKARTSQKYAHYANLVTTIVYTYLMILTLAFFSEKQLANAIWAYLSMIKIIQFPFIERFEYIIVSVWAFFILPNVSFTLWGVSRGIKEALGIKQKYVLPVIILFIFILSFFLNNRNKINLLNTWTGQIGFVYIYVYLPVLWLIQTAKIKLRR.

10 helical membrane passes run 11 to 31 (SPYM…MLGF), 45 to 65 (ISTL…YQIL), 84 to 104 (IGGL…ATTL), 116 to 136 (FPSI…YYIV), 142 to 162 (VVAG…FTFF), 188 to 208 (MKGN…YPFI), 220 to 240 (YANL…LAFF), 270 to 290 (IIVS…LWGV), 300 to 320 (IKQK…SFFL), and 331 to 351 (TWTG…LWLI).

This sequence belongs to the amino acid-polyamine-organocation (APC) superfamily. Spore germination protein (SGP) (TC 2.A.3.9) family.

The protein resides in the membrane. Its function is as follows. Required for the germination response to inosine. Has no role in L-alanine germination. The sequence is that of Spore germination protein GerQB (gerQB) from Bacillus cereus.